The chain runs to 264 residues: Phosphoribosylaminoimidazole-succinocarboxamide synthase 1 (264 aa).

This sequence belongs to the SAICAR synthetase family.

The catalysed reaction is 5-amino-1-(5-phospho-D-ribosyl)imidazole-4-carboxylate + L-aspartate + ATP = (2S)-2-[5-amino-1-(5-phospho-beta-D-ribosyl)imidazole-4-carboxamido]succinate + ADP + phosphate + 2 H(+). It functions in the pathway purine metabolism; IMP biosynthesis via de novo pathway; 5-amino-1-(5-phospho-D-ribosyl)imidazole-4-carboxamide from 5-amino-1-(5-phospho-D-ribosyl)imidazole-4-carboxylate: step 1/2. The chain is Phosphoribosylaminoimidazole-succinocarboxamide synthase 1 (purC1) from Mesorhizobium japonicum (strain LMG 29417 / CECT 9101 / MAFF 303099) (Mesorhizobium loti (strain MAFF 303099)).